A 473-amino-acid polypeptide reads, in one-letter code: 3-isopropylmalate dehydratase large subunit (473 aa).

Residues Cys349, Cys409, and Cys412 each coordinate [4Fe-4S] cluster.

Belongs to the aconitase/IPM isomerase family. LeuC type 1 subfamily. In terms of assembly, heterodimer of LeuC and LeuD. The cofactor is [4Fe-4S] cluster.

It carries out the reaction (2R,3S)-3-isopropylmalate = (2S)-2-isopropylmalate. It functions in the pathway amino-acid biosynthesis; L-leucine biosynthesis; L-leucine from 3-methyl-2-oxobutanoate: step 2/4. Catalyzes the isomerization between 2-isopropylmalate and 3-isopropylmalate, via the formation of 2-isopropylmaleate. This Gloeobacter violaceus (strain ATCC 29082 / PCC 7421) protein is 3-isopropylmalate dehydratase large subunit.